The sequence spans 272 residues: 3-methyl-2-oxobutanoate hydroxymethyltransferase (272 aa).

Asp-43 and Asp-82 together coordinate Mg(2+). 3-methyl-2-oxobutanoate-binding positions include 43 to 44, Asp-82, and Lys-112; that span reads DS. Glu-114 is a binding site for Mg(2+). Glu-179 functions as the Proton acceptor in the catalytic mechanism.

The protein belongs to the PanB family. In terms of assembly, homodecamer; pentamer of dimers. Mg(2+) serves as cofactor.

The protein resides in the cytoplasm. It carries out the reaction 3-methyl-2-oxobutanoate + (6R)-5,10-methylene-5,6,7,8-tetrahydrofolate + H2O = 2-dehydropantoate + (6S)-5,6,7,8-tetrahydrofolate. Its pathway is cofactor biosynthesis; (R)-pantothenate biosynthesis; (R)-pantoate from 3-methyl-2-oxobutanoate: step 1/2. Catalyzes the reversible reaction in which hydroxymethyl group from 5,10-methylenetetrahydrofolate is transferred onto alpha-ketoisovalerate to form ketopantoate. The chain is 3-methyl-2-oxobutanoate hydroxymethyltransferase from Staphylococcus epidermidis (strain ATCC 35984 / DSM 28319 / BCRC 17069 / CCUG 31568 / BM 3577 / RP62A).